A 234-amino-acid chain; its full sequence is Large ribosomal subunit protein uL1 (234 aa).

It belongs to the universal ribosomal protein uL1 family. In terms of assembly, part of the 50S ribosomal subunit.

In terms of biological role, binds directly to 23S rRNA. The L1 stalk is quite mobile in the ribosome, and is involved in E site tRNA release. Its function is as follows. Protein L1 is also a translational repressor protein, it controls the translation of the L11 operon by binding to its mRNA. The polypeptide is Large ribosomal subunit protein uL1 (Aliivibrio fischeri (strain MJ11) (Vibrio fischeri)).